The primary structure comprises 410 residues: Secreted protein PRY1 (410 aa).

The N-terminal stretch at 1 to 20 (MKQNYILSIILCYLLANVHS) is a signal peptide. Disordered regions lie at residues 64–86 (PAPV…STPS), 102–132 (SDSD…SSSS), and 148–260 (SSSS…SSSS). Over residues 148-179 (SSSSTPSSISQQQQQQQGSPASGSNSPNSAQP) the composition is skewed to low complexity. Over residues 197–211 (SGLGSGFGSGFGSGS) the composition is skewed to gly residues. Positions 212-260 (GSDSDSGSGLPSASSSTIIQQQPSSSNIGSSSTSSSSSSSSSSSSSSSS) are enriched in low complexity. The 112-residue stretch at 283–394 (LDAHNKYRAQ…NWGLYVVCEY (112 aa)) folds into the SCP domain.

It belongs to the CRISP family.

Its subcellular location is the secreted. Its function is as follows. Secreted protein that acts as a virulence factor during infections. The polypeptide is Secreted protein PRY1 (PRY1) (Candida albicans (strain SC5314 / ATCC MYA-2876) (Yeast)).